The primary structure comprises 414 residues: Zinc metalloproteinase nas-26 (414 aa).

Positions 1-20 (MTSSLVLILAPLALVAIGEA) are cleaved as a signal peptide. Positions 21–61 (AFGNSSKIFEIPGLEVMASDKYPHFTTIETVSRTKVHRHRR) are excised as a propeptide. An N-linked (GlcNAc...) asparagine glycan is attached at N24. A Peptidase M12A domain is found at 62–264 (EVIAGQIYDW…AKVINDIYCP (203 aa)). Disulfide bonds link C103–C263, C126–C146, C267–C286, C289–C300, C308–C331, and C358–C378. Residue H154 participates in Zn(2+) binding. The active site involves E155. Residues H158 and H164 each coordinate Zn(2+). The region spanning 251–307 (AFLDAKVINDIYCPNACQGRNHLNCLAGGYPDPNNCNVCRCPEGLGGPDCGRLQPSP) is the EGF-like domain. Residues 308-414 (CGGEIHASDQ…RFSLRFRRQA (107 aa)) form the CUB domain.

Zn(2+) serves as cofactor.

The protein localises to the secreted. Functionally, metalloprotease. In Caenorhabditis elegans, this protein is Zinc metalloproteinase nas-26 (toh-1).